Reading from the N-terminus, the 163-residue chain is Cyanate hydratase (163 aa).

Active-site residues include arginine 103, glutamate 106, and serine 129.

This sequence belongs to the cyanase family.

The enzyme catalyses cyanate + hydrogencarbonate + 3 H(+) = NH4(+) + 2 CO2. In terms of biological role, catalyzes the reaction of cyanate with bicarbonate to produce ammonia and carbon dioxide. The polypeptide is Cyanate hydratase (Paracoccidioides brasiliensis (strain Pb18)).